The following is a 258-amino-acid chain: Thiazole synthase (258 aa).

Lys-100 acts as the Schiff-base intermediate with DXP in catalysis. Residues Gly-161, 187-188 (AG), and 209-210 (NS) contribute to the 1-deoxy-D-xylulose 5-phosphate site.

The protein belongs to the ThiG family. As to quaternary structure, homotetramer. Forms heterodimers with either ThiH or ThiS.

The protein resides in the plastid. It is found in the chloroplast. The catalysed reaction is [ThiS sulfur-carrier protein]-C-terminal-Gly-aminoethanethioate + 2-iminoacetate + 1-deoxy-D-xylulose 5-phosphate = [ThiS sulfur-carrier protein]-C-terminal Gly-Gly + 2-[(2R,5Z)-2-carboxy-4-methylthiazol-5(2H)-ylidene]ethyl phosphate + 2 H2O + H(+). It participates in cofactor biosynthesis; thiamine diphosphate biosynthesis. Its function is as follows. Catalyzes the rearrangement of 1-deoxy-D-xylulose 5-phosphate (DXP) to produce the thiazole phosphate moiety of thiamine. Sulfur is provided by the thiocarboxylate moiety of the carrier protein ThiS. In vitro, sulfur can be provided by H(2)S. The protein is Thiazole synthase of Cyanidioschyzon merolae (strain NIES-3377 / 10D) (Unicellular red alga).